The sequence spans 155 residues: Arginine repressor (155 aa).

Belongs to the ArgR family.

It is found in the cytoplasm. It functions in the pathway amino-acid biosynthesis; L-arginine biosynthesis [regulation]. Regulates arginine biosynthesis genes. This is Arginine repressor from Histophilus somni (strain 129Pt) (Haemophilus somnus).